Reading from the N-terminus, the 328-residue chain is 4-hydroxythreonine-4-phosphate dehydrogenase (328 aa).

Substrate contacts are provided by H134 and T135. A divalent metal cation-binding residues include H164, H209, and H265. Residues K273, N282, and R291 each contribute to the substrate site.

The protein belongs to the PdxA family. In terms of assembly, homodimer. Requires Zn(2+) as cofactor. Mg(2+) serves as cofactor. It depends on Co(2+) as a cofactor.

It localises to the cytoplasm. The enzyme catalyses 4-(phosphooxy)-L-threonine + NAD(+) = 3-amino-2-oxopropyl phosphate + CO2 + NADH. It participates in cofactor biosynthesis; pyridoxine 5'-phosphate biosynthesis; pyridoxine 5'-phosphate from D-erythrose 4-phosphate: step 4/5. Its function is as follows. Catalyzes the NAD(P)-dependent oxidation of 4-(phosphooxy)-L-threonine (HTP) into 2-amino-3-oxo-4-(phosphooxy)butyric acid which spontaneously decarboxylates to form 3-amino-2-oxopropyl phosphate (AHAP). In Vibrio vulnificus (strain YJ016), this protein is 4-hydroxythreonine-4-phosphate dehydrogenase.